Consider the following 440-residue polypeptide: O-glycoside alpha-1,2-mannosyltransferase homolog 4 (440 aa).

Residues methionine 1–phenylalanine 35 lie on the Cytoplasmic side of the membrane. A helical; Signal-anchor for type II membrane protein transmembrane segment spans residues valine 36–isoleucine 56. At tyrosine 57 to glutamate 440 the chain is on the lumenal side. Catalysis depends on glutamate 336, which acts as the Nucleophile.

The protein belongs to the glycosyltransferase 15 family.

The protein resides in the cytoplasm. It is found in the nucleus. Its subcellular location is the golgi apparatus membrane. Functionally, probable mannosyltransferase involved in O-glycosylation of cell wall and secreted proteins. Transfers an alpha-D-mannosyl residue from GDP-mannose into lipid-linked oligosaccharide, forming an alpha-(1-&gt;2)-D-mannosyl-D-mannose linkage. The sequence is that of O-glycoside alpha-1,2-mannosyltransferase homolog 4 (omh4) from Schizosaccharomyces pombe (strain 972 / ATCC 24843) (Fission yeast).